Consider the following 345-residue polypeptide: Phenylalanine--tRNA ligase alpha subunit (345 aa).

Mg(2+) is bound at residue Glu-253.

The protein belongs to the class-II aminoacyl-tRNA synthetase family. Phe-tRNA synthetase alpha subunit type 1 subfamily. As to quaternary structure, tetramer of two alpha and two beta subunits. Requires Mg(2+) as cofactor.

It is found in the cytoplasm. It carries out the reaction tRNA(Phe) + L-phenylalanine + ATP = L-phenylalanyl-tRNA(Phe) + AMP + diphosphate + H(+). The protein is Phenylalanine--tRNA ligase alpha subunit of Lawsonia intracellularis (strain PHE/MN1-00).